The following is a 623-amino-acid chain: uncharacterized protein (623 aa).

The stretch at 24 to 51 forms a coiled coil; it reads RALVQKDELAQASQDVEDMRDCYDSLLN. 5 disordered regions span residues 148–170, 240–343, 362–393, 454–531, and 585–607; these read TRQR…QQLQ, FSGL…TTPP, ALPT…TKAI, SFSG…LGYS, and KKLG…PQAL. Positions 243–259 are enriched in acidic residues; it reads LEDDDGDDEIENNENDG. Polar residues predominate over residues 328–343; sequence VSQSAPLFPENRTTPP. Low complexity predominate over residues 364-379; that stretch reads PTPVETTRSPSSTTSP. Residues 384 to 393 are compositionally biased toward polar residues; sequence VGSSNPTKAI. Positions 484 to 495 are enriched in low complexity; the sequence is PVSKLPKVSSSP. Residues 496–506 are compositionally biased toward polar residues; it reads TASPTFVSTPK. Pro residues predominate over residues 590 to 606; it reads PSPPLTPMSLIHPPPQA.

This is an uncharacterized protein from Arabidopsis thaliana (Mouse-ear cress).